Here is a 447-residue protein sequence, read N- to C-terminus: Tubulin beta-5 chain (447 aa).

Residues Gln11, Glu69, Ser138, Gly142, Thr143, Gly144, Asn204, and Asn226 each contribute to the GTP site. Glu69 is a binding site for Mg(2+). Residues 421–447 form a disordered region; the sequence is EYQQYQDATADDEEEDYGDEEEDEVAA. Acidic residues predominate over residues 429–447; it reads TADDEEEDYGDEEEDEVAA.

This sequence belongs to the tubulin family. In terms of assembly, dimer of alpha and beta chains. A typical microtubule is a hollow water-filled tube with an outer diameter of 25 nm and an inner diameter of 15 nM. Alpha-beta heterodimers associate head-to-tail to form protofilaments running lengthwise along the microtubule wall with the beta-tubulin subunit facing the microtubule plus end conferring a structural polarity. Microtubules usually have 13 protofilaments but different protofilament numbers can be found in some organisms and specialized cells. The cofactor is Mg(2+). In terms of tissue distribution, expressed in roots, leaf sheaths, and suspension cultured cells.

The protein resides in the cytoplasm. It is found in the cytoskeleton. In terms of biological role, tubulin is the major constituent of microtubules, a cylinder consisting of laterally associated linear protofilaments composed of alpha- and beta-tubulin heterodimers. Microtubules grow by the addition of GTP-tubulin dimers to the microtubule end, where a stabilizing cap forms. Below the cap, tubulin dimers are in GDP-bound state, owing to GTPase activity of alpha-tubulin. This chain is Tubulin beta-5 chain (TUBB5), found in Oryza sativa subsp. japonica (Rice).